The primary structure comprises 431 residues: Adenylosuccinate synthetase (431 aa).

Residues 12 to 18 (GDEGKGK) and 40 to 42 (GHT) each bind GTP. Aspartate 13 serves as the catalytic Proton acceptor. Residues aspartate 13 and glycine 40 each coordinate Mg(2+). Residues 13–16 (DEGK), 38–41 (NAGH), threonine 129, arginine 143, glutamine 224, threonine 239, and arginine 303 each bind IMP. Histidine 41 acts as the Proton donor in catalysis. Residue 299-305 (TVSNRQR) participates in substrate binding. GTP-binding positions include arginine 305, 331-333 (KLD), and 413-415 (STG).

This sequence belongs to the adenylosuccinate synthetase family. Homodimer. Mg(2+) serves as cofactor.

Its subcellular location is the cytoplasm. The enzyme catalyses IMP + L-aspartate + GTP = N(6)-(1,2-dicarboxyethyl)-AMP + GDP + phosphate + 2 H(+). The protein operates within purine metabolism; AMP biosynthesis via de novo pathway; AMP from IMP: step 1/2. In terms of biological role, plays an important role in the de novo pathway of purine nucleotide biosynthesis. Catalyzes the first committed step in the biosynthesis of AMP from IMP. This chain is Adenylosuccinate synthetase, found in Ehrlichia canis (strain Jake).